The sequence spans 574 residues: Sulfate adenylyltransferase (574 aa).

The N-terminal stretch occupies residues 1 to 169 (MANPPHGGVL…IEAINKLNHY (169 aa)). Residues 170–394 (DYVALRYTPA…LRESSPPRHT (225 aa)) form a catalytic region. Glutamine 197 is a sulfate binding site. Residues 197-200 (QTRN) and 291-294 (GRDH) each bind ATP. Residues threonine 198, arginine 199, and asparagine 200 contribute to the active site. Arginine 199 provides a ligand contact to sulfate. A sulfate-binding site is contributed by alanine 295. Valine 333 contacts ATP. Residues 395–574 (QGFTIFLTGY…LETEGFFDRS (180 aa)) form an allosteric regulation domain; adenylyl-sulfate kinase-like region. Residues 434-437 (DTVR), arginine 451, 477-478 (IA), and arginine 516 contribute to the 3'-phosphoadenylyl sulfate site.

This sequence in the N-terminal section; belongs to the sulfate adenylyltransferase family. It in the C-terminal section; belongs to the APS kinase family. As to quaternary structure, homohexamer. Dimer of trimers.

It localises to the cytoplasm. The catalysed reaction is sulfate + ATP + H(+) = adenosine 5'-phosphosulfate + diphosphate. Its pathway is sulfur metabolism; hydrogen sulfide biosynthesis; sulfite from sulfate: step 1/3. With respect to regulation, allosterically inhibited by 3'-phosphoadenosine 5'-phosphosulfate (PAPS). In terms of biological role, catalyzes the first intracellular reaction of sulfate assimilation, forming adenosine-5'-phosphosulfate (APS) from inorganic sulfate and ATP. Plays an important role in sulfate activation as a component of the biosynthesis pathway of sulfur-containing amino acids. In Aspergillus fumigatus (strain ATCC MYA-4609 / CBS 101355 / FGSC A1100 / Af293) (Neosartorya fumigata), this protein is Sulfate adenylyltransferase.